The following is a 355-amino-acid chain: MEDLEETLFEEFENYSYALDYYSLESDLEEKVQLGVVHWVSLVLYCLSFVLGIPGNAIVIWFTGFKWKRTVSTLWFLNLAIADFIFLLFLPLYISYVVMNFHWPFGIWLCKANSFTAQLNMFASVFFLTVISLDHYIHLIHPVLSHRHRTLKNSLIVIIFIWLLASLIGGPALYFRDTVEFNNHTLCYNNFQKHDPDLTVIRHHVLTWVKYIVGYLFPLLTMSICYLCLILKVKKRSILISSRHFWTILAVVVAFVVCWTPYHLFSIWELTIHHNSYSHHVMQAGIPLSTGLAFLNSCLNPILYVLISKKFQARFRSSVAEILKYTLWEVSCSGTVSEQLRNSETKNLCLLETAQ.

The Extracellular segment spans residues 1–41 (MEDLEETLFEEFENYSYALDYYSLESDLEEKVQLGVVHWVS). Asn14 carries an N-linked (GlcNAc...) asparagine glycan. Residues 42–62 (LVLYCLSFVLGIPGNAIVIWF) form a helical membrane-spanning segment. The Cytoplasmic portion of the chain corresponds to 63–73 (TGFKWKRTVST). A helical transmembrane segment spans residues 74–94 (LWFLNLAIADFIFLLFLPLYI). Residues 95–112 (SYVVMNFHWPFGIWLCKA) lie on the Extracellular side of the membrane. A disulfide bond links Cys110 and Cys187. A helical transmembrane segment spans residues 113-133 (NSFTAQLNMFASVFFLTVISL). Over 134 to 154 (DHYIHLIHPVLSHRHRTLKNS) the chain is Cytoplasmic. A helical transmembrane segment spans residues 155 to 175 (LIVIIFIWLLASLIGGPALYF). The Extracellular portion of the chain corresponds to 176-210 (RDTVEFNNHTLCYNNFQKHDPDLTVIRHHVLTWVK). A helical transmembrane segment spans residues 211–231 (YIVGYLFPLLTMSICYLCLIL). The Cytoplasmic portion of the chain corresponds to 232–247 (KVKKRSILISSRHFWT). The helical transmembrane segment at 248–268 (ILAVVVAFVVCWTPYHLFSIW) threads the bilayer. Topologically, residues 269 to 286 (ELTIHHNSYSHHVMQAGI) are extracellular. The chain crosses the membrane as a helical span at residues 287 to 307 (PLSTGLAFLNSCLNPILYVLI). At 308-355 (SKKFQARFRSSVAEILKYTLWEVSCSGTVSEQLRNSETKNLCLLETAQ) the chain is on the cytoplasmic side.

It belongs to the chemokine-like receptor (CMKLR) family.

The protein localises to the cell membrane. Its function is as follows. Receptor for chemoattractant adipokine chemerin/RARRES2 suggesting a role for this receptor in the regulation of inflammation and energy homesotasis. Signals mainly via beta-arrestin pathway. Binding of RARRES2 activates weakly G proteins, calcium mobilization and MAPK1/MAPK3 (ERK1/2) phosphorylation too. Acts also as a receptor for TAFA1, mediates its effects on neuronal stem-cell proliferation and differentiation via the activation of ROCK/ERK and ROCK/STAT3 signaling pathway. This chain is Chemerin-like receptor 2 (CMKLR2), found in Macaca fascicularis (Crab-eating macaque).